A 511-amino-acid polypeptide reads, in one-letter code: Bifunctional purine biosynthesis protein PurH (511 aa).

Residues 1 to 144 (MKTALLSVSD…KNFASVLPVV (144 aa)) enclose the MGS-like domain.

The protein belongs to the PurH family.

It catalyses the reaction (6R)-10-formyltetrahydrofolate + 5-amino-1-(5-phospho-beta-D-ribosyl)imidazole-4-carboxamide = 5-formamido-1-(5-phospho-D-ribosyl)imidazole-4-carboxamide + (6S)-5,6,7,8-tetrahydrofolate. It carries out the reaction IMP + H2O = 5-formamido-1-(5-phospho-D-ribosyl)imidazole-4-carboxamide. It participates in purine metabolism; IMP biosynthesis via de novo pathway; 5-formamido-1-(5-phospho-D-ribosyl)imidazole-4-carboxamide from 5-amino-1-(5-phospho-D-ribosyl)imidazole-4-carboxamide (10-formyl THF route): step 1/1. Its pathway is purine metabolism; IMP biosynthesis via de novo pathway; IMP from 5-formamido-1-(5-phospho-D-ribosyl)imidazole-4-carboxamide: step 1/1. The polypeptide is Bifunctional purine biosynthesis protein PurH (Pediococcus pentosaceus (strain ATCC 25745 / CCUG 21536 / LMG 10740 / 183-1w)).